A 457-amino-acid chain; its full sequence is Serine--tRNA ligase (457 aa).

252 to 254 is a binding site for L-serine; it reads TAE. ATP is bound by residues 283–285 and valine 299; that span reads RKE. Glutamate 306 is a binding site for L-serine. 370–373 contacts ATP; sequence EMVS. Threonine 406 lines the L-serine pocket.

The protein belongs to the class-II aminoacyl-tRNA synthetase family. Type-1 seryl-tRNA synthetase subfamily. As to quaternary structure, homodimer. The tRNA molecule binds across the dimer.

Its subcellular location is the cytoplasm. It carries out the reaction tRNA(Ser) + L-serine + ATP = L-seryl-tRNA(Ser) + AMP + diphosphate + H(+). The enzyme catalyses tRNA(Sec) + L-serine + ATP = L-seryl-tRNA(Sec) + AMP + diphosphate + H(+). It functions in the pathway aminoacyl-tRNA biosynthesis; selenocysteinyl-tRNA(Sec) biosynthesis; L-seryl-tRNA(Sec) from L-serine and tRNA(Sec): step 1/1. In terms of biological role, catalyzes the attachment of serine to tRNA(Ser). Is also able to aminoacylate tRNA(Sec) with serine, to form the misacylated tRNA L-seryl-tRNA(Sec), which will be further converted into selenocysteinyl-tRNA(Sec). In Saccharolobus islandicus (strain Y.N.15.51 / Yellowstone #2) (Sulfolobus islandicus), this protein is Serine--tRNA ligase.